Here is a 577-residue protein sequence, read N- to C-terminus: Sulfite reductase [NADPH] hemoprotein beta-component (577 aa).

[4Fe-4S] cluster is bound by residues Cys-440, Cys-446, Cys-486, and Cys-490. Siroheme is bound at residue Cys-490.

This sequence belongs to the nitrite and sulfite reductase 4Fe-4S domain family. Alpha(8)-beta(8). The alpha component is a flavoprotein, the beta component is a hemoprotein. Siroheme is required as a cofactor. Requires [4Fe-4S] cluster as cofactor.

The enzyme catalyses hydrogen sulfide + 3 NADP(+) + 3 H2O = sulfite + 3 NADPH + 4 H(+). It functions in the pathway sulfur metabolism; hydrogen sulfide biosynthesis; hydrogen sulfide from sulfite (NADPH route): step 1/1. In terms of biological role, component of the sulfite reductase complex that catalyzes the 6-electron reduction of sulfite to sulfide. This is one of several activities required for the biosynthesis of L-cysteine from sulfate. The polypeptide is Sulfite reductase [NADPH] hemoprotein beta-component (Vibrio cholerae serotype O1 (strain ATCC 39541 / Classical Ogawa 395 / O395)).